The primary structure comprises 160 residues: SsrA-binding protein (160 aa).

Residues 132–160 (KIHDKRDDMQKKDAQQEIARALKSSNRYE) form a disordered region. A compositionally biased stretch (basic and acidic residues) spans 135-146 (DKRDDMQKKDAQ).

Belongs to the SmpB family.

The protein localises to the cytoplasm. Functionally, required for rescue of stalled ribosomes mediated by trans-translation. Binds to transfer-messenger RNA (tmRNA), required for stable association of tmRNA with ribosomes. tmRNA and SmpB together mimic tRNA shape, replacing the anticodon stem-loop with SmpB. tmRNA is encoded by the ssrA gene; the 2 termini fold to resemble tRNA(Ala) and it encodes a 'tag peptide', a short internal open reading frame. During trans-translation Ala-aminoacylated tmRNA acts like a tRNA, entering the A-site of stalled ribosomes, displacing the stalled mRNA. The ribosome then switches to translate the ORF on the tmRNA; the nascent peptide is terminated with the 'tag peptide' encoded by the tmRNA and targeted for degradation. The ribosome is freed to recommence translation, which seems to be the essential function of trans-translation. The sequence is that of SsrA-binding protein from Leptospira borgpetersenii serovar Hardjo-bovis (strain JB197).